We begin with the raw amino-acid sequence, 143 residues long: Large ribosomal subunit protein uL11 (143 aa).

This sequence belongs to the universal ribosomal protein uL11 family. Part of the ribosomal stalk of the 50S ribosomal subunit. Interacts with L10 and the large rRNA to form the base of the stalk. L10 forms an elongated spine to which L12 dimers bind in a sequential fashion forming a multimeric L10(L12)X complex. Post-translationally, one or more lysine residues are methylated.

Its function is as follows. Forms part of the ribosomal stalk which helps the ribosome interact with GTP-bound translation factors. The chain is Large ribosomal subunit protein uL11 from Azoarcus sp. (strain BH72).